A 222-amino-acid polypeptide reads, in one-letter code: Collectrin (222 aa).

Residues 1-14 form the signal peptide; it reads MLWALFFLVTTIHA. The Extracellular portion of the chain corresponds to 15–141; sequence ELCRPDAENA…LAPPMDPSVP (127 aa). Residues 21 to 222 form the Collectrin-like domain; that stretch reads AENAFKVRLS…LTEDERLTPL (202 aa). 2 N-linked (GlcNAc...) asparagine glycosylation sites follow: Asn-76 and Asn-93. A helical membrane pass occupies residues 142 to 162; that stretch reads VWIIVFGVIFCIVTVAIALLV. Residues 163-222 are Cytoplasmic-facing; the sequence is LSGIRQRRRNKKGPPGVEDAEDKCENIITIENGIPCDPLDMKGGHINDGFLTEDERLTPL. Phosphothreonine occurs at positions 214 and 220.

Belongs to the CLTRN family. As to quaternary structure, monomer. Homodimer; dimerization prevents CLTRN cleavage by BACE2. Interacts with SLC6A18; this interaction regulates the trafficking of SLC6A18 to the cell membrane and its amino acid transporter activity. Interacts with SLC6A19; this interaction regulates the trafficking of SLC6A19 to the cell membrane and its amino acid transporter activity. Interacts with SNAPIN. In terms of processing, glycosylated. Glycosylation is required for plasma membrane localization and for its cleavage by BACE2. Proteolytically processed in pancreatic beta cells by BACE2 leading to the generation and extracellular release of soluble CLTRN, and a corresponding cell-associated C-terminal fragment which is later cleaved by gamma-secretase. This shedding process inactivates CLTRN. Three cleavage sites have been identified for BACE2, two clustered sites after Phe-116 and Leu-118 and a more membrane proximal site at Phe-125; the preferred BACE2 cleavage site seems to be between Phe-125 and Leu-126, Phe-116 and Leu-118 act as alternative sites. Kidney; collecting ducts. Pancreas; beta cells of islets.

The protein resides in the cell membrane. Functionally, plays an important role in amino acid transport by acting as binding partner of amino acid transporters SLC6A18 and SLC6A19, regulating their trafficking on the cell surface and their activity. May also play a role in trafficking of amino acid transporters SLC3A1 and SLC7A9 to the renal cortical cell membrane. Regulator of SNARE complex function. Stimulator of beta cell replication. In Rattus norvegicus (Rat), this protein is Collectrin.